We begin with the raw amino-acid sequence, 1935 residues long: MVDAEMAAFGEAAPYLRKSEKERLEAQTRPFDLKKDVFVPDDKEEFVKATILSREGGKVTAETEHGKTVTVKEDQVLQQNPPKFDKIEDMAMLTFLHEPAVLYNLKERYASWMIYTYSGLFCVTINPYKWLPVYNAEVVAAYRGKKRSEAPPHIFSISDNAYQYMLTDRENQSILITGESGAGKTVNTKRVIQYFAVIAAIGDRSKKEQATGKGTLEDQIIQANPALEAFGNAKTVRNDNSSRFGKFIRIHFGATGKLASADIETYLLEKSRVIFQLKAERDYHIFYQILSNKKPELLDMLLITNNPYDYAFISQGETTVASIDDAEELMATDNAFDVLGFTTEEKNSMYKLTGAIMHFGNMKFKLKQREEQAEPDGTEEADKSAYLMGLNSADLLKGLCHPRVKVGNEYVTKGQNVQQVVYAKGALAKAVYERMFNWMVTRINATLETKQPRQYFIGVLDIAGFEIFDFNSFEQLCINFTNEKLQQFFNHHMFVLEQEEYKKEGIEWEFIDFGMDLQACIDLIEKPMGIMSILEEECMFPKATDMTFKAKLFDNHLGKSSNFQKPRNIKGKPEAHFSLIHYAGTVDYNIIGWLQKNKDPLNETVVDLYKKSSLKMLSSLFANYAGFDTPIEKGKGKAKKGSSFQTVSALHRENLNKLMTNLRSTHPHFVRCIIPNETKSPGVIDNPLVMHQLRCNGVLEGIRICRKGFPNRILYGDFRQRYRILNPAAIPEGQFIDSRKGAEKLLGSLDIDHNQYKFGHTKVFFKAGLLGLLEEMRDERLSRIITRIQAQSRGVLSRMEFKKLLERRDSLLIIQWNIRAFMGVKNWPWMKLYFKIKPLLKSAETEKEIALMKEEFGRLKEALEKSEARRKELEEKMVSLLQEKNDLQLQVQAEQDNLADAEERCDQLIKNKIQLEAKVKEMTERLEDEEEMNAELTAKKRKLEDECSELKRDIDDLELTLAKVEKEKHATENKVKNLTEEMAGLDEIIAKLTKEKKALQEAHQQALDDLQAEEDKVNTLTKAKVKLEQHVDDLEGSLEQEKKVRMDLERAKRKLEGDLKLTQESIMDLENDKQQLDERLKKKDFELNALNARIEDEQALGSQLQKKLKELQARIEELEEELEAERTARAKVEKLRSDLSRELEEISERLEEAGGATSVQIEMNKKREAEFQKMRRDLEEATLQHEATAAALRKKHADSVAELSEQIDNLQRVKQKLEKEKSEFKLELDDVTSNMEQIIKAKANLEKMCRTLEDQMNEHRSKAEETQRSVNDLTSQRAKLQTENGELSRQLDEKEALISQLTRGKLTYTQQLEDLKRQLEEEVKAKNALAHALQSARHDCDLLREQYEEETEAKAELQRVLSKANSEVAQWRTKYETDAIQRTEELEEAKKKLAQRLQDAEEAVEAVNAKCSSLEKTKHRLQNEIEDLMVDVERSNAAAAALDKKQRNFDKILAEWKQKYEESQSELESSQKEARSLSTELFKLKNAYEESLEHLETFKRENKNLQEEISDLTEQLGSSGKTIHELEKVRKQLEAEKLELQSALEEAEASLEQEEGKILRAQLEFNQIKAEMERKLAEKDEEMEQAKRNHLRVVDSLQTSLDAETRSRNEALRVKKKMEGDLNEMEIQLSHANRLAAEAQKQVKSLQSLLKDTQIQLDDAVRANDDLKENIAIVERRNNLLQAELEELRAVVEQTERSRKLAEQELIETSERVQLLHSQNTSLINQKKKMEADLSQLQTEVEEAVQECRNAEEKAKKAITDAAMMAEELKKEQDTSAHLERMKKNMEQTIKDLQHRLDEAEQIALKGGKKQLQKLEARVRELENELEAEQKRNAESVKGMRKSERRIKELTYQTEEDRKNLLRLQDLVDKLQLKVKAYKRQAEEAEEQANTNLSKFRKVQHELDEAEERADIAESQVNKLRAKSRDIGTKGLNEE.

A Myosin N-terminal SH3-like domain is found at 32 to 81 (DLKKDVFVPDDKEEFVKATILSREGGKVTAETEHGKTVTVKEDQVLQQNP). Residues 85 to 778 (DKIEDMAMLT…LLGLLEEMRD (694 aa)) form the Myosin motor domain. K129 bears the N6,N6,N6-trimethyllysine mark. 178–185 (GESGAGKT) lines the ATP pocket. T378 is subject to Phosphothreonine. 2 actin-binding regions span residues 655-677 (LNKL…IPNE) and 757-771 (KFGH…GLLG). The region spanning 781 to 810 (LSRIITRIQAQSRGVLSRMEFKKLLERRDS) is the IQ domain. Positions 839–1935 (LLKSAETEKE…DIGTKGLNEE (1097 aa)) form a coiled coil. 2 positions are modified to phosphoserine: S1137 and S1269. At T1282 the chain carries Phosphothreonine. Y1308 bears the Phosphotyrosine mark. T1309 is subject to Phosphothreonine. S1510 is modified (phosphoserine). At T1513 the chain carries Phosphothreonine. A disordered region spans residues 1907-1935 (EERADIAESQVNKLRAKSRDIGTKGLNEE). The span at 1923–1935 (KSRDIGTKGLNEE) shows a compositional bias: basic and acidic residues.

It belongs to the TRAFAC class myosin-kinesin ATPase superfamily. Myosin family. In terms of assembly, muscle myosin is a hexameric protein that consists of 2 heavy chain subunits (MHC), 2 alkali light chain subunits (MLC) and 2 regulatory light chain subunits (MLC-2). Interacts with ECPAS. Interacts (via C-terminus) with LRRC39.

Its subcellular location is the cytoplasm. It localises to the myofibril. It is found in the sarcomere. In terms of biological role, myosins are actin-based motor molecules with ATPase activity essential for muscle contraction. Forms regular bipolar thick filaments that, together with actin thin filaments, constitute the fundamental contractile unit of skeletal and cardiac muscle. The sequence is that of Myosin-7 (MYH7) from Bos taurus (Bovine).